We begin with the raw amino-acid sequence, 328 residues long: uncharacterized protein (328 aa).

A Phosphoserine modification is found at serine 170.

It is found in the cytoplasm. Its subcellular location is the nucleus. This is an uncharacterized protein from Schizosaccharomyces pombe (strain 972 / ATCC 24843) (Fission yeast).